We begin with the raw amino-acid sequence, 192 residues long: Imidazole glycerol phosphate synthase subunit HisH (192 aa).

One can recognise a Glutamine amidotransferase type-1 domain in the interval 1 to 192 (MIVIVDYGLG…QAIQGGFIND (192 aa)). C77 acts as the Nucleophile in catalysis. Active-site residues include H169 and E171.

In terms of assembly, heterodimer of HisH and HisF.

Its subcellular location is the cytoplasm. It catalyses the reaction 5-[(5-phospho-1-deoxy-D-ribulos-1-ylimino)methylamino]-1-(5-phospho-beta-D-ribosyl)imidazole-4-carboxamide + L-glutamine = D-erythro-1-(imidazol-4-yl)glycerol 3-phosphate + 5-amino-1-(5-phospho-beta-D-ribosyl)imidazole-4-carboxamide + L-glutamate + H(+). The enzyme catalyses L-glutamine + H2O = L-glutamate + NH4(+). It functions in the pathway amino-acid biosynthesis; L-histidine biosynthesis; L-histidine from 5-phospho-alpha-D-ribose 1-diphosphate: step 5/9. Functionally, IGPS catalyzes the conversion of PRFAR and glutamine to IGP, AICAR and glutamate. The HisH subunit catalyzes the hydrolysis of glutamine to glutamate and ammonia as part of the synthesis of IGP and AICAR. The resulting ammonia molecule is channeled to the active site of HisF. The sequence is that of Imidazole glycerol phosphate synthase subunit HisH from Staphylococcus aureus (strain bovine RF122 / ET3-1).